The sequence spans 2291 residues: Spectrin beta chain (2291 aa).

The interval 1–271 (MTTDISIVRW…IITYVVTYYH (271 aa)) is actin-binding. 2 Calponin-homology (CH) domains span residues 50–154 (SVQK…LRFQ) and 169–274 (KSAK…HYFS). Spectrin repeat units lie at residues 300–408 (VHDY…ALRE), 420–521 (AARF…MRLE), 525–633 (QLQQ…RLEE), 636–739 (KLWQ…RLEN), 743–843 (YFQL…QRLL), 848–948 (LYKL…MDDL), 954–1057 (VQTF…KLEE), 1060–1166 (DLHR…VLLS), 1170–1272 (DQQL…EKLK), 1276–1376 (KLHE…GAML), 1386–1484 (QQTC…KALE), 1488–1591 (EAFQ…HLLE), 1594–1697 (KVQQ…RLNE), 1701–1802 (LFML…TQML), 1807–1909 (ELHK…QKLA), 1913–2015 (DLFR…ENLQ), and 2020–2089 (VYQF…KEMK). Basic and acidic residues predominate over residues 2097–2140 (EAERQRIKEEQEAKAASEAAEQAKREAERRDDVDVGASHDDSER). The disordered stretch occupies residues 2097 to 2152 (EAERQRIKEEQEAKAASEAAEQAKREAERRDDVDVGASHDDSERGGTPGAGEGHEG). Residues 2147-2259 (GEGHEGYVTR…WVTSLKAQSD (113 aa)) enclose the PH domain. S2195 carries the post-translational modification Phosphoserine. A compositionally biased stretch (polar residues) spans 2262–2275 (AVAASRSQTLPATS). Residues 2262 to 2291 (AVAASRSQTLPATSQKDEPKRRSFFTLKKK) form a disordered region.

It belongs to the spectrin family. In terms of assembly, native spectrin molecule is a tetramer composed of two antiparallel heterodimers joined head to head so that each end of the native molecule includes the C-terminus of the alpha subunit and the N-terminus of the beta subunit.

The protein resides in the cytoplasm. It is found in the cytoskeleton. It localises to the cell cortex. Its function is as follows. Spectrin is the major constituent of the cytoskeletal network underlying the erythrocyte plasma membrane. It associates with band 4.1 and actin to form the cytoskeletal superstructure of the erythrocyte plasma membrane. Interacts with calmodulin in a calcium-dependent manner. The chain is Spectrin beta chain (beta-Spec) from Drosophila melanogaster (Fruit fly).